The chain runs to 117 residues: UPF0102 protein FTW_1281 (117 aa).

The protein belongs to the UPF0102 family.

In Francisella tularensis subsp. tularensis (strain WY96-3418), this protein is UPF0102 protein FTW_1281.